Reading from the N-terminus, the 754-residue chain is uncharacterized protein (754 aa).

The segment at 1–110 (MNKGQNQVVP…RNMLGSLQKT (110 aa)) is disordered. Positions 15–25 (FGGQNPPQLSS) are enriched in polar residues. Residues 26–35 (IPPIVNPVVV) are compositionally biased toward low complexity. Polar residues predominate over residues 36 to 46 (QNRTSPGTPFI). A compositionally biased stretch (basic and acidic residues) spans 49–60 (KAKEIYNRRQQE). The segment covering 62–72 (ISSDSEEEESP) has biased composition (acidic residues). The segment covering 76 to 93 (AKSKYSRDSRDSRDTRDS) has biased composition (basic and acidic residues).

The protein resides in the virion. This is an uncharacterized protein from Acanthamoeba polyphaga mimivirus (APMV).